Reading from the N-terminus, the 352-residue chain is tRNA N6-adenosine threonylcarbamoyltransferase (352 aa).

Residues His-115 and His-119 each contribute to the Fe cation site. Substrate contacts are provided by residues 138 to 142, Asp-171, Gly-184, and Asn-276; that span reads LVSGG. Asp-304 serves as a coordination point for Fe cation.

It belongs to the KAE1 / TsaD family. Fe(2+) serves as cofactor.

Its subcellular location is the cytoplasm. It catalyses the reaction L-threonylcarbamoyladenylate + adenosine(37) in tRNA = N(6)-L-threonylcarbamoyladenosine(37) in tRNA + AMP + H(+). Its function is as follows. Required for the formation of a threonylcarbamoyl group on adenosine at position 37 (t(6)A37) in tRNAs that read codons beginning with adenine. Is involved in the transfer of the threonylcarbamoyl moiety of threonylcarbamoyl-AMP (TC-AMP) to the N6 group of A37, together with TsaE and TsaB. TsaD likely plays a direct catalytic role in this reaction. This Xanthomonas axonopodis pv. citri (strain 306) protein is tRNA N6-adenosine threonylcarbamoyltransferase.